Reading from the N-terminus, the 284-residue chain is Acetylglutamate kinase (284 aa).

Residues 66–67 (GG), Arg88, and Asn179 contribute to the substrate site.

This sequence belongs to the acetylglutamate kinase family. ArgB subfamily.

It localises to the cytoplasm. The enzyme catalyses N-acetyl-L-glutamate + ATP = N-acetyl-L-glutamyl 5-phosphate + ADP. The protein operates within amino-acid biosynthesis; L-arginine biosynthesis; N(2)-acetyl-L-ornithine from L-glutamate: step 2/4. Catalyzes the ATP-dependent phosphorylation of N-acetyl-L-glutamate. The chain is Acetylglutamate kinase from Actinobacillus pleuropneumoniae serotype 5b (strain L20).